Reading from the N-terminus, the 448-residue chain is Probable glycine dehydrogenase (decarboxylating) subunit 1 (448 aa).

Belongs to the GcvP family. N-terminal subunit subfamily. As to quaternary structure, the glycine cleavage system is composed of four proteins: P, T, L and H. In this organism, the P 'protein' is a heterodimer of two subunits.

It carries out the reaction N(6)-[(R)-lipoyl]-L-lysyl-[glycine-cleavage complex H protein] + glycine + H(+) = N(6)-[(R)-S(8)-aminomethyldihydrolipoyl]-L-lysyl-[glycine-cleavage complex H protein] + CO2. Its function is as follows. The glycine cleavage system catalyzes the degradation of glycine. The P protein binds the alpha-amino group of glycine through its pyridoxal phosphate cofactor; CO(2) is released and the remaining methylamine moiety is then transferred to the lipoamide cofactor of the H protein. In Staphylococcus epidermidis (strain ATCC 35984 / DSM 28319 / BCRC 17069 / CCUG 31568 / BM 3577 / RP62A), this protein is Probable glycine dehydrogenase (decarboxylating) subunit 1.